The following is a 221-amino-acid chain: Probable septum site-determining protein MinC (221 aa).

The protein belongs to the MinC family. In terms of assembly, interacts with MinD and FtsZ.

Cell division inhibitor that blocks the formation of polar Z ring septums. Rapidly oscillates between the poles of the cell to destabilize FtsZ filaments that have formed before they mature into polar Z rings. Prevents FtsZ polymerization. This chain is Probable septum site-determining protein MinC, found in Shewanella frigidimarina (strain NCIMB 400).